Here is a 196-residue protein sequence, read N- to C-terminus: MFRLDLLSDPLEQFKLWYDEAIRHETLHPDAMVLATADSKGKPSARNVLYKGISKGGFLIFTNYHSRKAHELDENPQAAWVFYWPKTYKQVRGEGRVERLTQEESEAYFETRSYESQIAAWVSEQSQEIPDREYLITRYKKYREKFQDDVRCPEFWGGFRLIPDRMEFWVGQEHRLHDRFCYLKENQEWKIIRLAP.

FMN is bound by residues 46-51 (RNVLYK), 61-62 (FT), Arg-67, Lys-68, and Gln-90. Lys-51 serves as a coordination point for substrate. Substrate contacts are provided by Tyr-108, Arg-112, and Ser-116. Residues 125-126 (QS) and Trp-169 each bind FMN. Residue 175 to 177 (RLH) coordinates substrate. Arg-179 contributes to the FMN binding site.

Belongs to the pyridoxamine 5'-phosphate oxidase family. As to quaternary structure, homodimer. FMN serves as cofactor.

It carries out the reaction pyridoxamine 5'-phosphate + O2 + H2O = pyridoxal 5'-phosphate + H2O2 + NH4(+). It catalyses the reaction pyridoxine 5'-phosphate + O2 = pyridoxal 5'-phosphate + H2O2. The protein operates within cofactor metabolism; pyridoxal 5'-phosphate salvage; pyridoxal 5'-phosphate from pyridoxamine 5'-phosphate: step 1/1. Its pathway is cofactor metabolism; pyridoxal 5'-phosphate salvage; pyridoxal 5'-phosphate from pyridoxine 5'-phosphate: step 1/1. Catalyzes the oxidation of either pyridoxine 5'-phosphate (PNP) or pyridoxamine 5'-phosphate (PMP) into pyridoxal 5'-phosphate (PLP). The sequence is that of Pyridoxine/pyridoxamine 5'-phosphate oxidase from Coxiella burnetii (strain RSA 493 / Nine Mile phase I).